The following is a 149-amino-acid chain: Large ribosomal subunit protein uL13 (149 aa).

This sequence belongs to the universal ribosomal protein uL13 family. Part of the 50S ribosomal subunit.

Functionally, this protein is one of the early assembly proteins of the 50S ribosomal subunit, although it is not seen to bind rRNA by itself. It is important during the early stages of 50S assembly. The protein is Large ribosomal subunit protein uL13 of Pelodictyon phaeoclathratiforme (strain DSM 5477 / BU-1).